Here is a 322-residue protein sequence, read N- to C-terminus: Olfactory receptor 11L1 (322 aa).

The Extracellular portion of the chain corresponds to 1-25; that stretch reads MEPQNTSTVTNFQLLGFQNLLEWQA. N-linked (GlcNAc...) asparagine glycosylation occurs at asparagine 5. Residues 26–46 form a helical membrane-spanning segment; sequence LLFVIFLLIYCLTIIGNVVII. Residues 47–54 lie on the Cytoplasmic side of the membrane; sequence TVVSQGLR. Residues 55–75 form a helical membrane-spanning segment; it reads LHSPMYMFLQHLSFLEVWYTS. Topologically, residues 76-99 are extracellular; it reads TTVPLLLANLLSWGQAISFSACMA. Residues cysteine 97 and cysteine 189 are joined by a disulfide bond. Residues 100 to 120 form a helical membrane-spanning segment; it reads QLYFFVFLGATECFLLAFMAY. At 121 to 139 the chain is on the cytoplasmic side; it reads DRYLAICSPLRYPFLMHRG. The chain crosses the membrane as a helical span at residues 140–160; sequence LCARLVVVSWCTGVSTGFLPS. Residues 161-197 lie on the Extracellular side of the membrane; that stretch reads LMISRLDFCGRNQINHFFCDLPPLMQLSCSRVYITEV. The helical transmembrane segment at 198–217 threads the bilayer; the sequence is TIFILSIAVLCICFFLTLGP. The Cytoplasmic portion of the chain corresponds to 218–237; that stretch reads YVFIVSSILRIPSTSGRRKT. A helical membrane pass occupies residues 238-258; that stretch reads FSTCGSHLAVVTLYYGTMISM. Residues 259-271 are Extracellular-facing; the sequence is YVCPSPHLLPEIN. A helical transmembrane segment spans residues 272–292; it reads KIISVFYTVVTPLLNPVIYSL. Topologically, residues 293 to 322 are cytoplasmic; that stretch reads RNKDFKEAVRKVMRRKCGILWSTSKRKFLY.

Belongs to the G-protein coupled receptor 1 family.

The protein localises to the cell membrane. In terms of biological role, odorant receptor. The chain is Olfactory receptor 11L1 (OR11L1) from Homo sapiens (Human).